A 627-amino-acid polypeptide reads, in one-letter code: 5-aminolevulinate synthase, non-specific, mitochondrial (627 aa).

Residues 1–58 constitute a mitochondrion transit peptide; sequence MDVIVRRCPFLARVPQAFFQQSKKSLAVYAQRCPFMMELASKPMAPSLARALCSSSSS. Substrate is bound by residues Arg204, Ser321, and Lys340. The pyridoxal 5'-phosphate site is built by Ser373, His401, and Thr429. Lys432 is an active-site residue. Lys432 is modified (N6-(pyridoxal phosphate)lysine). 2 residues coordinate pyridoxal 5'-phosphate: Thr461 and Thr462. Thr549 contributes to the substrate binding site.

It belongs to the class-II pyridoxal-phosphate-dependent aminotransferase family. Homodimer. It depends on pyridoxal 5'-phosphate as a cofactor.

The protein localises to the mitochondrion inner membrane. It catalyses the reaction succinyl-CoA + glycine + H(+) = 5-aminolevulinate + CO2 + CoA. It functions in the pathway porphyrin-containing compound metabolism; protoporphyrin-IX biosynthesis; 5-aminolevulinate from glycine: step 1/1. Catalyzes the pyridoxal 5'-phosphate (PLP)-dependent condensation of succinyl-CoA and glycine to form aminolevulinic acid (ALA), with CoA and CO2 as by-products. This chain is 5-aminolevulinate synthase, non-specific, mitochondrial (alas1), found in Opsanus tau (Oyster toadfish).